We begin with the raw amino-acid sequence, 340 residues long: Anthranilate phosphoribosyltransferase (340 aa).

Residues Gly-83, 86–87 (GD), Thr-91, 93–96 (NIST), 111–119 (KHGNRSITS), and Ser-123 contribute to the 5-phospho-alpha-D-ribose 1-diphosphate site. Gly-83 is an anthranilate binding site. Ser-95 lines the Mg(2+) pocket. Asn-114 is an anthranilate binding site. Residue Arg-169 coordinates anthranilate. Residues Asp-228 and Glu-229 each contribute to the Mg(2+) site.

Belongs to the anthranilate phosphoribosyltransferase family. Homodimer. The cofactor is Mg(2+).

It carries out the reaction N-(5-phospho-beta-D-ribosyl)anthranilate + diphosphate = 5-phospho-alpha-D-ribose 1-diphosphate + anthranilate. Its pathway is amino-acid biosynthesis; L-tryptophan biosynthesis; L-tryptophan from chorismate: step 2/5. In terms of biological role, catalyzes the transfer of the phosphoribosyl group of 5-phosphorylribose-1-pyrophosphate (PRPP) to anthranilate to yield N-(5'-phosphoribosyl)-anthranilate (PRA). The chain is Anthranilate phosphoribosyltransferase from Solibacter usitatus (strain Ellin6076).